Here is a 522-residue protein sequence, read N- to C-terminus: 2-isopropylmalate synthase (522 aa).

The Pyruvate carboxyltransferase domain occupies 5 to 267 (VIIFDTTLRD…ETGINAKEIH (263 aa)). Mn(2+)-binding residues include Asp-14, His-202, His-204, and Asn-238. Residues 392–522 (QLRQLVVQSD…MHKNRELGGV (131 aa)) are regulatory domain.

This sequence belongs to the alpha-IPM synthase/homocitrate synthase family. LeuA type 1 subfamily. Homodimer. It depends on Mn(2+) as a cofactor.

Its subcellular location is the cytoplasm. The enzyme catalyses 3-methyl-2-oxobutanoate + acetyl-CoA + H2O = (2S)-2-isopropylmalate + CoA + H(+). It participates in amino-acid biosynthesis; L-leucine biosynthesis; L-leucine from 3-methyl-2-oxobutanoate: step 1/4. Functionally, catalyzes the condensation of the acetyl group of acetyl-CoA with 3-methyl-2-oxobutanoate (2-ketoisovalerate) to form 3-carboxy-3-hydroxy-4-methylpentanoate (2-isopropylmalate). The protein is 2-isopropylmalate synthase of Shewanella oneidensis (strain ATCC 700550 / JCM 31522 / CIP 106686 / LMG 19005 / NCIMB 14063 / MR-1).